The chain runs to 101 residues: Small ribosomal subunit protein uS10 (101 aa).

It belongs to the universal ribosomal protein uS10 family. Part of the 30S ribosomal subunit.

Its function is as follows. Involved in the binding of tRNA to the ribosomes. The protein is Small ribosomal subunit protein uS10 of Christiangramia forsetii (strain DSM 17595 / CGMCC 1.15422 / KT0803) (Gramella forsetii).